The sequence spans 851 residues: Protein NUD1 (851 aa).

Disordered regions lie at residues 1 to 31 (MDMDTQEAELSSQLENLTINSPRKLRSNAHS) and 216 to 352 (LVGS…KAPS). The segment covering 8–21 (AELSSQLENLTINS) has biased composition (polar residues). Composition is skewed to low complexity over residues 223–246 (NSNNKNNNNNNNNNNNNSININNK) and 260–278 (SNSFEFSSSSSMSSSQTQS). A compositionally biased stretch (polar residues) spans 291–304 (NTISPGQLGYQFNH). The span at 320–333 (SSSHSLDNTSSNQS) shows a compositional bias: low complexity. A Glycyl lysine isopeptide (Lys-Gly) (interchain with G-Cter in ubiquitin) cross-link involves residue lysine 357. 2 positions are modified to phosphothreonine: threonine 388 and threonine 392. Phosphoserine occurs at positions 417 and 419. LRR repeat units follow at residues 544-566 (DLECLDLSYNLLNTSLKFLSLCH), 567-588 (HLQEVNLSYNSIQSLEGIGSSR), 589-609 (MKKLNLSNNEINGIIDFEQLI), 621-642 (TVEVLDLSNNNIIGVRNINCLP), and 643-664 (RLKVLNLNGNPLVSIVESSKME).

As to quaternary structure, interacts directly with MPC54, CNM67, SPO21/MPC70, ADY3 and ADY4. Probable component of a spindle pole boby (SPB) complex composed of ADY3, SSP1, DON1, MPC54, SPO21/MPC70, NUD1 and CNM67. Post-translationally, phosphorylated from S/G2 phase until the end of mitosis.

It is found in the cytoplasm. The protein resides in the cytoskeleton. Its subcellular location is the microtubule organizing center. The protein localises to the spindle pole body. It localises to the nucleus envelope. In terms of biological role, involved in astral microtubule organization by binding SCP72 to the outer plaque in a cell-cycle dependent manner. Required for the mitotic exit by facilitating the binding of TEMP1 to CDC15. Also involved in the pathway that organizes the shaping and sizing of the prospore membrane (PSM) during sporulation. This chain is Protein NUD1 (NUD1), found in Saccharomyces cerevisiae (strain ATCC 204508 / S288c) (Baker's yeast).